We begin with the raw amino-acid sequence, 119 residues long: Ig heavy chain V region X44 (119 aa).

In terms of domain architecture, Ig-like spans 1 to 117; that stretch reads EVKLLESGGG…WGQGTLVTVS (117 aa).

The sequence is that of Ig heavy chain V region X44 from Mus musculus (Mouse).